The following is a 173-amino-acid chain: Dual-action ribosomal maturation protein DarP (173 aa).

The protein belongs to the DarP family.

The protein localises to the cytoplasm. Its function is as follows. Member of a network of 50S ribosomal subunit biogenesis factors which assembles along the 30S-50S interface, preventing incorrect 23S rRNA structures from forming. Promotes peptidyl transferase center (PTC) maturation. The sequence is that of Dual-action ribosomal maturation protein DarP from Pseudomonas putida (strain W619).